A 937-amino-acid chain; its full sequence is Protocadherin alpha-7 (937 aa).

An N-terminal signal peptide occupies residues 1–29 (MVNLRGYNWKSQQLLLFLIIVAAWEAGSG). At 30–697 (QLHYSVPEEA…RVDQRLVDVN (668 aa)) the chain is on the extracellular side. Cadherin domains are found at residues 34-133 (SVPE…PPMF), 157-242 (ASDA…APVF), 243-350 (DRSL…APQL), 351-455 (TVSS…APLF), 456-565 (AQPE…APTL), and 587-682 (PGQV…SSKV). Residues C96 and C102 are joined by a disulfide bond. 2 O-linked (Man) threonine glycosylation sites follow: T223 and T225. N-linked (GlcNAc...) asparagine glycosylation is found at N257 and N265. The O-linked (Man) threonine glycan is linked to T438. Residue S478 is glycosylated (O-linked (Man) serine). A glycan (N-linked (GlcNAc...) asparagine) is linked at N548. Residues 698–718 (VYLIIAICAVSSLLVLTLLLY) traverse the membrane as a helical segment. Residues 719-937 (TALRCSATPT…GNSTTDNSDQ (219 aa)) are Cytoplasmic-facing. 2 disordered regions span residues 755–794 (RQRV…PDWR) and 816–843 (RAGP…EVSP). PXXP repeat units lie at residues 774 to 777 (PSLP), 786 to 789 (PRQP), 819 to 822 (PGGP), 860 to 863 (PGNP), and 878 to 881 (PGSP). A 5 X 4 AA repeats of P-X-X-P region spans residues 774–881 (PSLPQGPSST…PDKFIIPGSP (108 aa)). Residues 775 to 787 (SLPQGPSSTDNPR) are compositionally biased toward polar residues. Residues 887–937 (RQEPANNQIDKSDFITFGKKEETKKKKKKKKGNKTQEKKEKGNSTTDNSDQ) form a disordered region. The segment covering 896-910 (DKSDFITFGKKEETK) has biased composition (basic and acidic residues).

As to quaternary structure, forms homodimers in trans (molecules expressed by two different cells). Forms promiscuous heterodimers in cis (at the plasma membrane of the same cell) with other protocadherins.

The protein resides in the cell membrane. In terms of biological role, calcium-dependent cell-adhesion protein involved in cells self-recognition and non-self discrimination. Thereby, it is involved in the establishment and maintenance of specific neuronal connections in the brain. The protein is Protocadherin alpha-7 of Mus musculus (Mouse).